A 336-amino-acid polypeptide reads, in one-letter code: DNA repair protein RAD51 homolog A (336 aa).

Residues 45–74 (TVEAVAYAPKKELLNIKGISEAKAEKILAE) enclose the HhH domain. Residue 124 to 131 (GEFRTGKT) coordinates ATP. The Nuclear export signal signature appears at 242-257 (LARFLRMLLRLADEFG).

The protein belongs to the RecA family. RAD51 subfamily. In terms of assembly, forms linear homooligomers, giving rise to a RAD51 nucleoprotein filament, which is essential for strand-pairing reactions during DNA recombination.

It is found in the nucleus. Its subcellular location is the cytoplasm. The protein localises to the chromosome. Its function is as follows. Plays an important role in homologous strand exchange, a key step in DNA repair through homologous recombination (HR). Binds to single-stranded DNA in an ATP-dependent manner to form nucleoprotein filaments which are essential for the homology search and strand exchange. Catalyzes the recognition of homology and strand exchange between homologous DNA partners to form a joint molecule between a processed DNA break and the repair template. Recruited to resolve stalled replication forks during replication stress. Also involved in interstrand cross-link repair. The protein is DNA repair protein RAD51 homolog A (rad51-a) of Xenopus laevis (African clawed frog).